We begin with the raw amino-acid sequence, 176 residues long: Ribosome maturation factor RimM (176 aa).

The PRC barrel domain occupies 97-176; sequence EDEFYWRDLI…QILVDWDPDF (80 aa).

The protein belongs to the RimM family. Binds ribosomal protein uS19.

The protein localises to the cytoplasm. Functionally, an accessory protein needed during the final step in the assembly of 30S ribosomal subunit, possibly for assembly of the head region. Essential for efficient processing of 16S rRNA. May be needed both before and after RbfA during the maturation of 16S rRNA. It has affinity for free ribosomal 30S subunits but not for 70S ribosomes. In Shewanella loihica (strain ATCC BAA-1088 / PV-4), this protein is Ribosome maturation factor RimM.